A 634-amino-acid polypeptide reads, in one-letter code: UPF0329 protein ECU07_1850/ECU10_0050 (634 aa).

Composition is skewed to basic and acidic residues over residues 354-365 and 397-407; these read REEREKREESKG and GESKEEDRGEE. The segment at 354–438 is disordered; sequence REEREKREES…KGSGEKRISE (85 aa). Over residues 408 to 417 the composition is skewed to acidic residues; the sequence is GGVEAEDPLE.

Belongs to the UPF0329 family.

The sequence is that of UPF0329 protein ECU07_1850/ECU10_0050 from Encephalitozoon cuniculi (strain GB-M1) (Microsporidian parasite).